Here is a 276-residue protein sequence, read N- to C-terminus: Probable endonuclease 4 (276 aa).

Zn(2+) contacts are provided by histidine 66, histidine 106, glutamate 141, aspartate 175, histidine 178, histidine 210, aspartate 223, histidine 225, and glutamate 255.

The protein belongs to the AP endonuclease 2 family. The cofactor is Zn(2+).

The catalysed reaction is Endonucleolytic cleavage to 5'-phosphooligonucleotide end-products.. In terms of biological role, endonuclease IV plays a role in DNA repair. It cleaves phosphodiester bonds at apurinic or apyrimidinic (AP) sites, generating a 3'-hydroxyl group and a 5'-terminal sugar phosphate. The protein is Probable endonuclease 4 of Heliobacterium modesticaldum (strain ATCC 51547 / Ice1).